Consider the following 638-residue polypeptide: Factor of DNA methylation 3 (638 aa).

Residues 318 to 497 (FNRIFADHEK…RALISNLRDM (180 aa)) are a coiled coil.

Acts in association with FDM4 and FDM5 for RNA-directed DNA methylation (RdDM). This is Factor of DNA methylation 3 from Arabidopsis thaliana (Mouse-ear cress).